A 770-amino-acid chain; its full sequence is Semaphorin-4F (770 aa).

A signal peptide spans 1 to 34 (MPASAARPRPGPGQPTASPFPLLLLAVLSGPVSG). Topologically, residues 35 to 659 (RVPRSVPRTS…RDAPSRAHTV (625 aa)) are extracellular. Positions 42 to 510 (RTSLPISEAD…SRTEVTQVNT (469 aa)) constitute a Sema domain. N-linked (GlcNAc...) asparagine glycosylation occurs at N64. The cysteines at positions 112 and 122 are disulfide-linked. N133 carries an N-linked (GlcNAc...) asparagine glycan. 3 disulfides stabilise this stretch: C140–C149, C273–C384, and C297–C343. N509 carries an N-linked (GlcNAc...) asparagine glycan. Positions 512–563 (NCGRLQSCSECILAQDPVCAWSFRLDECVAHAGEHRGLVQDIESADVSSLCP) constitute a PSI domain. Cystine bridges form between C513–C530, C522–C539, and C587–C628. An Ig-like C2-type domain is found at 580-635 (AAHVVLPCSPSSAWASCVWHQPSGVTALTPRRDGLEVVVTPGAMGAYACECQEGGA). A helical membrane pass occupies residues 660-680 (GAGLAGFFLGILAASLTLILI). The Cytoplasmic segment spans residues 681 to 770 (GRRQQRRRQR…PLATCDETSI (90 aa)). The segment at 696–725 (DKVGLDLGAPPSGTTSYSQDPPSPSPEDER) is disordered. Residues S718 and S720 each carry the phosphoserine modification. Positions 768-770 (TSI) match the PDZ-binding motif.

It belongs to the semaphorin family. As to quaternary structure, interacts (via PDZ-binding motif) with DLG4/SAP90 (via PDZ domain 2); this interaction may promote translocation of DLG4/SAP90 to the membrane.

The protein localises to the cell membrane. It localises to the postsynaptic density. It is found in the perikaryon. The protein resides in the cell projection. Its subcellular location is the dendrite. Probable cell surface receptor that regulates oligodendroglial precursor cell migration. Might also regulate differentiation of oligodendroglial precursor cells. Has growth cone collapse activity against retinal ganglion-cell axons. In Homo sapiens (Human), this protein is Semaphorin-4F (SEMA4F).